Consider the following 109-residue polypeptide: Protein FAM32A-like (109 aa).

The segment at 1-48 is disordered; it reads MSEYKSVQKGSLKLKGVSLPSKKKKKKNKEMKRLEEQVLTSENEEGTK. The segment covering 9–20 has biased composition (low complexity); that stretch reads KGSLKLKGVSLP. Residues 21–30 show a composition bias toward basic residues; it reads SKKKKKKNKE.

It belongs to the FAM32 family.

It localises to the nucleus. In terms of biological role, may induce G2 arrest and apoptosis. May also increase cell sensitivity to apoptotic stimuli. This chain is Protein FAM32A-like (fam32al), found in Danio rerio (Zebrafish).